The chain runs to 98 residues: uncharacterized protein (98 aa).

It localises to the cytoplasm. This is an uncharacterized protein from Saccharomyces cerevisiae (strain ATCC 204508 / S288c) (Baker's yeast).